The primary structure comprises 1204 residues: ATP-dependent helicase/nuclease subunit A (1204 aa).

One can recognise a UvrD-like helicase ATP-binding domain in the interval 2 to 472; that stretch reads PQFTKEQEKA…ILLSDNFRST (471 aa). 23–30 is a binding site for ATP; it reads ASAGSGKT. In terms of domain architecture, UvrD-like helicase C-terminal spans 500-783; it reads GQLIFGAKYY…RLMTIHGSKG (284 aa).

This sequence belongs to the helicase family. AddA subfamily. As to quaternary structure, heterodimer of AddA and AddB/RexB. It depends on Mg(2+) as a cofactor.

The enzyme catalyses Couples ATP hydrolysis with the unwinding of duplex DNA by translocating in the 3'-5' direction.. It catalyses the reaction ATP + H2O = ADP + phosphate + H(+). Functionally, the heterodimer acts as both an ATP-dependent DNA helicase and an ATP-dependent, dual-direction single-stranded exonuclease. Recognizes the chi site generating a DNA molecule suitable for the initiation of homologous recombination. The AddA nuclease domain is required for chi fragment generation; this subunit has the helicase and 3' -&gt; 5' nuclease activities. This Lactobacillus helveticus (strain DPC 4571) protein is ATP-dependent helicase/nuclease subunit A.